Reading from the N-terminus, the 333-residue chain is 4-hydroxy-3-methylbut-2-enyl diphosphate reductase (333 aa).

Cys-20 is a binding site for [4Fe-4S] cluster. His-49 and His-85 together coordinate (2E)-4-hydroxy-3-methylbut-2-enyl diphosphate. Residues His-49 and His-85 each coordinate dimethylallyl diphosphate. Isopentenyl diphosphate contacts are provided by His-49 and His-85. Cys-107 is a binding site for [4Fe-4S] cluster. His-135 is a binding site for (2E)-4-hydroxy-3-methylbut-2-enyl diphosphate. Residue His-135 coordinates dimethylallyl diphosphate. His-135 is an isopentenyl diphosphate binding site. The active-site Proton donor is Glu-137. Position 176 (Thr-176) interacts with (2E)-4-hydroxy-3-methylbut-2-enyl diphosphate. [4Fe-4S] cluster is bound at residue Cys-206. The (2E)-4-hydroxy-3-methylbut-2-enyl diphosphate site is built by Ser-234, Ser-235, Asn-236, and Ser-279. Residues Ser-234, Ser-235, Asn-236, and Ser-279 each coordinate dimethylallyl diphosphate. 4 residues coordinate isopentenyl diphosphate: Ser-234, Ser-235, Asn-236, and Ser-279.

The protein belongs to the IspH family. It depends on [4Fe-4S] cluster as a cofactor.

It carries out the reaction isopentenyl diphosphate + 2 oxidized [2Fe-2S]-[ferredoxin] + H2O = (2E)-4-hydroxy-3-methylbut-2-enyl diphosphate + 2 reduced [2Fe-2S]-[ferredoxin] + 2 H(+). The catalysed reaction is dimethylallyl diphosphate + 2 oxidized [2Fe-2S]-[ferredoxin] + H2O = (2E)-4-hydroxy-3-methylbut-2-enyl diphosphate + 2 reduced [2Fe-2S]-[ferredoxin] + 2 H(+). It functions in the pathway isoprenoid biosynthesis; dimethylallyl diphosphate biosynthesis; dimethylallyl diphosphate from (2E)-4-hydroxy-3-methylbutenyl diphosphate: step 1/1. The protein operates within isoprenoid biosynthesis; isopentenyl diphosphate biosynthesis via DXP pathway; isopentenyl diphosphate from 1-deoxy-D-xylulose 5-phosphate: step 6/6. Catalyzes the conversion of 1-hydroxy-2-methyl-2-(E)-butenyl 4-diphosphate (HMBPP) into a mixture of isopentenyl diphosphate (IPP) and dimethylallyl diphosphate (DMAPP). Acts in the terminal step of the DOXP/MEP pathway for isoprenoid precursor biosynthesis. This chain is 4-hydroxy-3-methylbut-2-enyl diphosphate reductase, found in Rhizobium johnstonii (strain DSM 114642 / LMG 32736 / 3841) (Rhizobium leguminosarum bv. viciae).